The chain runs to 130 residues: Transcription antitermination protein NusB (130 aa).

Belongs to the NusB family.

Functionally, involved in transcription antitermination. Required for transcription of ribosomal RNA (rRNA) genes. Binds specifically to the boxA antiterminator sequence of the ribosomal RNA (rrn) operons. The chain is Transcription antitermination protein NusB from Bacillus mycoides (strain KBAB4) (Bacillus weihenstephanensis).